A 3432-amino-acid chain; its full sequence is Genome polyprotein (3432 aa).

Residues 2–15 (TKKPGGPGKNRAIN) form an interaction with host EXOC1 region. Residues 2–109 (TKKPGGPGKN…KKQNKRGGNE (108 aa)) lie on the Cytoplasmic side of the membrane. Residues 37-72 (LLDGRGPVRFVLALITFFKFTALAPTKALLGRWRAV) form a hydrophobic; homodimerization of capsid protein C region. Positions 106–127 (GGNESSIMWLASLAIVIACAGA) are cleaved as a propeptide — ER anchor for the capsid protein C, removed in mature form by serine protease NS3. A helical membrane pass occupies residues 110–130 (SSIMWLASLAIVIACAGAMKL). Residues 131 to 253 (SNFQGKLLMT…ATRYLMKTEN (123 aa)) are Extracellular-facing. Residue asparagine 142 is glycosylated (N-linked (GlcNAc...) asparagine; by host). Residues 254 to 274 (WIIRNPGYAFLAAALGWMLGS) traverse the membrane as a helical segment. Residues 275 to 279 (NSGQR) are Cytoplasmic-facing. A helical membrane pass occupies residues 280–294 (VVFTILLLLVAPAYS). Topologically, residues 295–746 (FNCLGMGNRD…QVFGGAFRTL (452 aa)) are extracellular. Cystine bridges form between cysteine 297-cysteine 324, cysteine 354-cysteine 410, cysteine 354-cysteine 415, cysteine 368-cysteine 399, cysteine 386-cysteine 410, and cysteine 386-cysteine 415. A fusion peptide region spans residues 392-405 (DRGWGNGCGLFGKG). N-linked (GlcNAc...) asparagine; by host glycosylation is present at asparagine 448. Disulfide bonds link cysteine 484–cysteine 581 and cysteine 598–cysteine 629. A helical membrane pass occupies residues 747–767 (FGGMSWITQGLMGALLLWMGV). At 768-773 (NARDRS) the chain is on the cytoplasmic side. Residues 774–794 (IALAFLATGGVLVFLATNVHA) form a helical membrane-spanning segment. Residues 795-1219 (DTGCAIDITR…AFAEANSGGD (425 aa)) lie on the Extracellular side of the membrane. Disulfide bonds link cysteine 798/cysteine 809, cysteine 849/cysteine 937, cysteine 973/cysteine 1017, cysteine 1074/cysteine 1123, cysteine 1085/cysteine 1106, and cysteine 1107/cysteine 1110. 2 N-linked (GlcNAc...) asparagine; by host glycosylation sites follow: asparagine 924 and asparagine 1001. Residues 1220-1240 (VLHLALIAVFKIQPAFLVMNM) form a helical membrane-spanning segment. Over 1241–1250 (LSARWTNQEN) the chain is Cytoplasmic. Residues 1251–1271 (MVLVLGAAFFQLASVDLQIGV) traverse the membrane as a helical segment. Residue histidine 1272 is a topological domain, lumenal. A helical transmembrane segment spans residues 1273 to 1293 (GILNAAAIAWMIVRAITFPTT). The Cytoplasmic segment spans residues 1294 to 1309 (STVAMPVLALLTPGMR). Residues 1310-1330 (ALYLDTYRIILLVIGICSLLQ) form a helical membrane-spanning segment. The Lumenal portion of the chain corresponds to 1331-1341 (ERRKTMAKKKG). A helical membrane pass occupies residues 1342–1362 (AVLLGLALTSTGWFSPTTIAA). Over 1363–1374 (GLMVCNPNKKRG) the chain is Cytoplasmic. A helical transmembrane segment spans residues 1375–1395 (WPATEFLSAVGLMFAIVGGLA). The Lumenal portion of the chain corresponds to 1396–1398 (ELD). Residues 1399–1419 (IESMSIPFMLAGLMAVSYVIS) traverse the membrane as a helical segment. Topologically, residues 1420-1476 (GKATDMWLDRAADISWEMEAAITGSSRRLDVKLDDDGDFHLIDDPGVPWKVWLLRMS) are cytoplasmic. The interval 1427 to 1466 (LDRAADISWEMEAAITGSSRRLDVKLDDDGDFHLIDDPGV) is interacts with and activates NS3 protease. The helical intramembrane region spans 1477 to 1497 (CIGLAALTPWAIVPAAFGYWL). Topologically, residues 1498–2173 (TLKTTKRGGV…RMALEELPDA (676 aa)) are cytoplasmic. The 178-residue stretch at 1505–1682 (GGVFWDTPSP…DRQEEPVPDA (178 aa)) folds into the Peptidase S7 domain. Active-site charge relay system; for serine protease NS3 activity residues include histidine 1555, aspartate 1579, and serine 1639. One can recognise a Helicase ATP-binding domain in the interval 1685–1841 (PSMLKKRQMT…DSNAPIHDLQ (157 aa)). The segment at 1689–1692 (KKRQ) is important for RNA-binding. 1698 to 1705 (LHPGSGKT) contributes to the ATP binding site. A DEAH box motif is present at residues 1789–1792 (DEAH). In terms of domain architecture, Helicase C-terminal spans 1852-2017 (GYEWITEYAG…GLVAQLYGPE (166 aa)). Lysine 1893 carries the N6-acetyllysine; by host modification. The tract at residues 1950–1969 (NPSPITSASAAQRRGRVGRN) is disordered. Positions 2168-2172 (EELPD) are regulates the ATPase activity of NS3 helicase. The chain crosses the membrane as a helical span at residues 2174 to 2194 (LETITLIVAITVMTGGFFLLM). Topologically, residues 2195 to 2199 (MQRKG) are lumenal. An intramembrane region (helical) is located at residues 2200–2220 (IGKMGLGALVLTLATFFLWAA). Position 2221 (glutamate 2221) is a topological domain, lumenal. Residues 2222-2242 (VPGTKIAGTLLVALLLMVVLI) form a helical membrane-spanning segment. Residues 2243–2257 (PEPEKQRSQTDNQLA) lie on the Cytoplasmic side of the membrane. Residues 2258-2278 (VFLICVLTVVGVVAANEYGML) traverse the membrane as a helical segment. Over 2279–2311 (EKTKADLKSMFGGRTQAPGLTGLPSMALDLRPA) the chain is Lumenal. Residues 2312 to 2332 (TAWALYGGSTVVLTPLLKHLI) constitute an intramembrane region (helical). Topologically, residues 2333-2368 (TSEYVTTSLASISSQAGSLFVLPRGVPFTDLDLTVG) are lumenal. A helical transmembrane segment spans residues 2369-2389 (LVFLGCWGQITLTTFLTAMVL). The Cytoplasmic portion of the chain corresponds to 2390-2444 (VTLHYGYMLPGWQAEALRAAQRRTAAGIMKNAVVDGMVATDVPELERTTPLMQKK). The helical transmembrane segment at 2445–2465 (VGQVLLIGVSVAAFLVNPNVT) threads the bilayer. Residues 2466–2469 (TVRE) lie on the Lumenal side of the membrane. The helical transmembrane segment at 2470-2490 (AGVLVTAATLTLWDNGASAVW) threads the bilayer. Topologically, residues 2491-3432 (NSTTATGLCH…DVLIQEDRVI (942 aa)) are cytoplasmic. One can recognise an mRNA cap 0-1 NS5-type MT domain in the interval 2528 to 2793 (GRPGGRTLGE…DVNLGSGTRA (266 aa)). Serine 2583 contributes to the S-adenosyl-L-methionine binding site. Serine 2583 bears the Phosphoserine mark. Lysine 2588 serves as the catalytic For 2'-O-MTase activity. 6 residues coordinate S-adenosyl-L-methionine: glycine 2613, tryptophan 2614, threonine 2631, lysine 2632, aspartate 2658, and valine 2659. The active-site For 2'-O-MTase activity is aspartate 2673. Isoleucine 2674 contacts S-adenosyl-L-methionine. Catalysis depends on for 2'-O-MTase activity residues lysine 2709 and glutamate 2745. Residue tyrosine 2747 coordinates S-adenosyl-L-methionine. Residues glutamate 2967, histidine 2971, cysteine 2976, and cysteine 2979 each contribute to the Zn(2+) site. Residues 3057–3209 (GKMYADDTAG…KPLDDRFATA (153 aa)) enclose the RdRp catalytic domain. Positions 3244, 3260, and 3379 each coordinate Zn(2+).

The protein in the N-terminal section; belongs to the class I-like SAM-binding methyltransferase superfamily. mRNA cap 0-1 NS5-type methyltransferase family. As to quaternary structure, homodimer. Interacts (via N-terminus) with host EXOC1 (via C-terminus); this interaction results in EXOC1 degradation through the proteasome degradation pathway. In terms of assembly, forms heterodimers with envelope protein E in the endoplasmic reticulum and Golgi. Homodimer; in the endoplasmic reticulum and Golgi. Interacts with protein prM. Interacts with non-structural protein 1. Interacts with host HSPA5. As to quaternary structure, homodimer; Homohexamer when secreted. Interacts with envelope protein E. NS1 interacts with NS4B. Interacts with host complement protein CFH; this interaction leads to the degradation of C3. In terms of assembly, interacts (via N-terminus) with serine protease NS3. Forms a heterodimer with serine protease NS3. May form homooligomers. As to quaternary structure, forms a heterodimer with NS2B. Interacts with non-structural protein 2A (via N-terminus). Interacts with NS4B. Interacts with unphosphorylated RNA-directed RNA polymerase NS5; this interaction stimulates RNA-directed RNA polymerase NS5 guanylyltransferase activity. Interacts with host ILF2. In terms of assembly, interacts with serine protease NS3. Homodimer. Interacts with host STAT2; this interaction inhibits the phosphorylation of the latter, and, when all viral proteins are present (polyprotein), targets STAT2 for degradation. Interacts with serine protease NS3. Requires Mn(2+) as cofactor. The cofactor is Mg(2+). In terms of processing, specific enzymatic cleavages in vivo yield mature proteins. Cleavages in the lumen of endoplasmic reticulum are performed by host signal peptidase, whereas cleavages in the cytoplasmic side are performed by serine protease NS3. Signal cleavage at the 2K-4B site requires a prior NS3 protease-mediated cleavage at the 4A-2K site. Cleaved in post-Golgi vesicles by a host furin, releasing the mature small envelope protein M, and peptide pr. This cleavage is incomplete as up to 30% of viral particles still carry uncleaved prM. Post-translationally, N-glycosylated. In terms of processing, N-glycosylated. The excreted form is glycosylated and this is required for efficient secretion of the protein from infected cells. Acetylated by host KAT5. Acetylation modulates NS3 RNA-binding and unwinding activities and plays an important positive role for viral replication. Post-translationally, phosphorylated on serines residues. This phosphorylation may trigger NS5 nuclear localization.

The protein localises to the host endoplasmic reticulum membrane. It localises to the virion. The protein resides in the host nucleus. It is found in the host cytoplasm. Its subcellular location is the host perinuclear region. The protein localises to the secreted. It localises to the virion membrane. The protein resides in the host cell surface. The catalysed reaction is Selective hydrolysis of -Xaa-Xaa-|-Yaa- bonds in which each of the Xaa can be either Arg or Lys and Yaa can be either Ser or Ala.. It carries out the reaction a ribonucleoside 5'-triphosphate + H2O = a ribonucleoside 5'-diphosphate + phosphate + H(+). The enzyme catalyses RNA(n) + a ribonucleoside 5'-triphosphate = RNA(n+1) + diphosphate. It catalyses the reaction ATP + H2O = ADP + phosphate + H(+). The catalysed reaction is a 5'-end (5'-triphosphoguanosine)-ribonucleoside in mRNA + S-adenosyl-L-methionine = a 5'-end (N(7)-methyl 5'-triphosphoguanosine)-ribonucleoside in mRNA + S-adenosyl-L-homocysteine. It carries out the reaction a 5'-end (N(7)-methyl 5'-triphosphoguanosine)-ribonucleoside in mRNA + S-adenosyl-L-methionine = a 5'-end (N(7)-methyl 5'-triphosphoguanosine)-(2'-O-methyl-ribonucleoside) in mRNA + S-adenosyl-L-homocysteine + H(+). Its function is as follows. Plays a role in virus budding by binding to the cell membrane and gathering the viral RNA into a nucleocapsid that forms the core of a mature virus particle. During virus entry, may induce genome penetration into the host cytoplasm after hemifusion induced by the surface proteins. Can migrate to the cell nucleus where it modulates host functions. Overcomes the anti-viral effects of host EXOC1 by sequestering and degrading the latter through the proteasome degradation pathway. Inhibits RNA silencing by interfering with host Dicer. In terms of biological role, prevents premature fusion activity of envelope proteins in trans-Golgi by binding to envelope protein E at pH6.0. After virion release in extracellular space, gets dissociated from E dimers. Functionally, acts as a chaperone for envelope protein E during intracellular virion assembly by masking and inactivating envelope protein E fusion peptide. prM is the only viral peptide matured by host furin in the trans-Golgi network probably to avoid catastrophic activation of the viral fusion activity in acidic Golgi compartment prior to virion release. prM-E cleavage is inefficient, and many virions are only partially matured. These uncleaved prM would play a role in immune evasion. Its function is as follows. May play a role in virus budding. Exerts cytotoxic effects by activating a mitochondrial apoptotic pathway through M ectodomain. May display a viroporin activity. Binds to host cell surface receptor and mediates fusion between viral and cellular membranes. Efficient virus attachment to cell is, at least in part, mediated by host HSPA5. Envelope protein is synthesized in the endoplasmic reticulum in the form of heterodimer with protein prM. They play a role in virion budding in the ER, and the newly formed immature particle is covered with 60 spikes composed of heterodimer between precursor prM and envelope protein E. The virion is transported to the Golgi apparatus where the low pH causes dissociation of PrM-E heterodimers and formation of E homodimers. prM-E cleavage is inefficient, and many virions are only partially matured. These uncleaved prM would play a role in immune evasion. In terms of biological role, involved in immune evasion, pathogenesis and viral replication. Once cleaved off the polyprotein, is targeted to three destinations: the viral replication cycle, the plasma membrane and the extracellular compartment. Essential for viral replication. Required for formation of the replication complex and recruitment of other non-structural proteins to the ER-derived membrane structures. Excreted as a hexameric lipoparticle that plays a role against host immune response. Antagonizing the complement function. Binds to the host macrophages and dendritic cells. Inhibits signal transduction originating from Toll-like receptor 3 (TLR3). Functionally, component of the viral RNA replication complex that functions in virion assembly and antagonizes the host alpha/beta interferon antiviral response. Its function is as follows. Required cofactor for the serine protease function of NS3. May have membrane-destabilizing activity and form viroporins. Displays three enzymatic activities: serine protease, NTPase and RNA helicase. NS3 serine protease, in association with NS2B, performs its autocleavage and cleaves the polyprotein at dibasic sites in the cytoplasm: C-prM, NS2A-NS2B, NS2B-NS3, NS3-NS4A, NS4A-2K and NS4B-NS5. NS3 RNA helicase binds RNA and unwinds dsRNA in the 3' to 5' direction. In terms of biological role, regulates the ATPase activity of the NS3 helicase activity. NS4A allows NS3 helicase to conserve energy during unwinding. Functionally, functions as a signal peptide for NS4B and is required for the interferon antagonism activity of the latter. Its function is as follows. Induces the formation of ER-derived membrane vesicles where the viral replication takes place. Inhibits interferon (IFN)-induced host STAT1 phosphorylation and nuclear translocation, thereby preventing the establishment of cellular antiviral state by blocking the IFN-alpha/beta pathway. Inhibits STAT2 translocation in the nucleus after IFN-alpha treatment. Replicates the viral (+) and (-) RNA genome. Performs the capping of genomes in the cytoplasm. NS5 methylates viral RNA cap at guanine N-7 and ribose 2'-O positions. Besides its role in RNA genome replication, also prevents the establishment of cellular antiviral state by blocking the interferon-alpha/beta (IFN-alpha/beta) signaling pathway. Inhibits host TYK2 and STAT2 phosphorylation, thereby preventing activation of JAK-STAT signaling pathway. The sequence is that of Genome polyprotein from Japanese encephalitis virus (strain M28) (JEV).